The following is a 474-amino-acid chain: Chromosomal replication initiator protein DnaA (474 aa).

The domain I, interacts with DnaA modulators stretch occupies residues 1–73 (MTNIEQERWS…LSCWQAEMPE (73 aa)). Residues 73–130 (EVHRIDLTVRTAMRCAAPAKEQAAPIEPRREDNRAAAHDLRVSATAPVSANHEALGGS) form a domain II region. Residues 131–353 (PLDPRLTFSS…GAINRLLAHS (223 aa)) form a domain III, AAA+ region region. 4 residues coordinate ATP: Gly-178, Gly-180, Lys-181, and Thr-182. Residues 354–474 (KLNAQPVTLE…VESLKRQLQE (121 aa)) are domain IV, binds dsDNA.

This sequence belongs to the DnaA family. In terms of assembly, oligomerizes as a right-handed, spiral filament on DNA at oriC.

The protein resides in the cytoplasm. Functionally, plays an essential role in the initiation and regulation of chromosomal replication. ATP-DnaA binds to the origin of replication (oriC) to initiate formation of the DNA replication initiation complex once per cell cycle. Binds the DnaA box (a 9 base pair repeat at the origin) and separates the double-stranded (ds)DNA. Forms a right-handed helical filament on oriC DNA; dsDNA binds to the exterior of the filament while single-stranded (ss)DNA is stabiized in the filament's interior. The ATP-DnaA-oriC complex binds and stabilizes one strand of the AT-rich DNA unwinding element (DUE), permitting loading of DNA polymerase. After initiation quickly degrades to an ADP-DnaA complex that is not apt for DNA replication. Binds acidic phospholipids. The polypeptide is Chromosomal replication initiator protein DnaA (Rhodopseudomonas palustris (strain BisA53)).